We begin with the raw amino-acid sequence, 287 residues long: Ribosomal RNA small subunit methyltransferase I (287 aa).

This sequence belongs to the methyltransferase superfamily. RsmI family.

Its subcellular location is the cytoplasm. The enzyme catalyses cytidine(1402) in 16S rRNA + S-adenosyl-L-methionine = 2'-O-methylcytidine(1402) in 16S rRNA + S-adenosyl-L-homocysteine + H(+). Its function is as follows. Catalyzes the 2'-O-methylation of the ribose of cytidine 1402 (C1402) in 16S rRNA. The sequence is that of Ribosomal RNA small subunit methyltransferase I from Streptococcus pyogenes serotype M3 (strain ATCC BAA-595 / MGAS315).